We begin with the raw amino-acid sequence, 1248 residues long: Period circadian protein homolog 2 (1248 aa).

A disordered region spans residues 1 to 57 (MNGYVEFSPSPTKESVEPQPSQAVLQEDVDMSSGSSGHENCSMGRDSQGSDCDDNGK). 2 stretches are compositionally biased toward polar residues: residues 9–24 (PSPTKESVEPQPSQAV) and 32–50 (SSGSSGHENCSMGRDSQGS). Residues 105–114 (LIRTLRELKV) carry the Nuclear export signal 1 motif. The region spanning 175–242 (ITSEYIVKNA…FHSYTTPYKL (68 aa)) is the PAS 1 domain. Residues 302-306 (LCCLL) carry the LXXLL motif. In terms of domain architecture, PAS 2 spans 315-381 (YEAPRIPPEK…MLAIHKKILQ (67 aa)). The PAC domain maps to 389-432 (YSPIRFRARNGEYITLDTSWSSFINPWSRKISFIIGRHKVRVGP). Positions 456-465 (LTEQIHRLLM) match the Nuclear export signal 2 motif. Disordered regions lie at residues 467–563 (PVPH…SLPK) and 619–638 (VSPGLHAEEAAPPPSKVSSH). The interval 474 to 478 (SGYGS) is important for protein stability. Residues 506-706 (RKSGISKNGS…GAPGGLSQEK (201 aa)) form a CSNK1E binding domain region. A compositionally biased stretch (polar residues) spans 510-521 (ISKNGSKTQTRS). Residues S521, S524, S527, and S540 each carry the phosphoserine modification. The span at 523 to 534 (FSHESGEQKEIA) shows a compositional bias: basic and acidic residues. Phosphoserine occurs at positions 656, 690, 694, 703, and 755. Disordered stretches follow at residues 675-708 (DKKPQPELETVEDAVSGPESLDGAPGGLSQEKGP) and 751-829 (RAQA…PSAP). Residues 773–789 (KKTGKNRKLKSKRVKTR) carry the Nuclear localization signal motif. Residues 774-787 (KTGKNRKLKSKRVK) are compositionally biased toward basic residues. Positions 816 to 827 (SPSDTSQSSCPS) are enriched in low complexity. Residues 873–1058 (DFAVQPLPLA…DLCSATGSAL (186 aa)) form an interaction with PPARG region. S930 bears the Phosphoserine mark. Residues 950–971 (TPPAATVTSGRASPPLFQSRGS) form a disordered region. The residue at position 955 (T955) is a Phosphothreonine. Position 962 is a phosphoserine (S962). The Nuclear export signal 3 signature appears at 974–981 (LQLNLLQL). A disordered region spans residues 984–1035 (APEGSTGAAGTSGTTGTAAAGLDCTPGTSRDRQPKAPSTCKEPSDTQNSDAL). The span at 987–1004 (GSTGAAGTSGTTGTAAAG) shows a compositional bias: low complexity. The LXXLL signature appears at 1042-1046 (LNLLL). A compositionally biased stretch (low complexity) spans 1057 to 1080 (ALSGSGASATSDSLGSGSLGCDAS). Residues 1057-1113 (ALSGSGASATSDSLGSGSLGCDASRSGAGSSDTSHTSKYFGSIDSSENNHKAKVSTD) are disordered. The span at 1083-1102 (GAGSSDTSHTSKYFGSIDSS) shows a compositional bias: polar residues. Over residues 1103–1112 (ENNHKAKVST) the composition is skewed to basic and acidic residues. S1117 is subject to Phosphoserine. The tract at residues 1148–1248 (SRDLESVLRE…LTGPRIEAQT (101 aa)) is CRY binding domain. The tract at residues 1215–1248 (PYEEDSPSPGLCDTSEAKEEEGEQLTGPRIEAQT) is disordered.

Homodimer. Component of the circadian core oscillator, which includes the CRY proteins, CLOCK or NPAS2, BMAL1 or BMAL2, CSNK1D and/or CSNK1E, TIMELESS, and the PER proteins. Interacts with CLOCK-BMAL1 (off DNA). Interacts with BMAL2. Interacts directly with PER1 and PER3, and through a C-terminal domain, with CRY1 and CRY2. Interacts (via PAS 2 domain) with TIMELESS. Interacts with NFIL3. Different large complexes have been identified with different repressive functions. The core of PER complexes is composed of at least PER1, PER2, PER3, CRY1, CRY2, CSNK1D and/or CSNK1E. The large PER complex involved in the repression of transcriptional termination is composed of at least PER2, CDK9, DDX5, DHX9, NCBP1 and POLR2A (active). The large PER complex involved in the histone deacetylation is composed of at least HDAC1, PER2, SFPQ and SIN3A. The large PER complex involved in the histone methylation is composed of at least PER2, CBX3, TRIM28, SUV39H1 and/or SUV39H2; CBX3 mediates the formation of the complex. Interacts with SETX; the interaction inhibits termination of circadian target genes. Interacts with the nuclear receptors HNF4A, NR1D1, NR4A2, RORA, PPARA, PPARG and THRA; the interaction with at least PPARG is ligand dependent. Interacts with PML. Interacts (phosphorylated) with BTRC and FBXW11; the interactions trigger proteasomal degradation. Interacts with NONO and SFPQ. Interacts with PRKCDBP. Interacts with MAGEL2. Interacts with MAP1LC3B. Interacts with HNF4A. Acetylated. Deacetylated by SIRT1, resulting in decreased protein stability. Deacetylated by SIRT6, preventing its degradation by the proteasome, resulting in increased protein stability. In terms of processing, phosphorylated by CSNK1E and CSNK1D. Phosphorylation results in PER2 protein degradation. May be dephosphorylated by PP1. Post-translationally, ubiquitinated, leading to its proteasomal degradation. Ubiquitination may be inhibited by CRY1. Expressed in the brain, mainly in the suprachiasmatic nucleus (SCN). Expression also found in the harderian gland, lung, eye, intestine, liver and skeletal muscle.

It localises to the nucleus. Its subcellular location is the cytoplasm. The protein localises to the perinuclear region. In terms of biological role, transcriptional repressor which forms a core component of the circadian clock. The circadian clock, an internal time-keeping system, regulates various physiological processes through the generation of approximately 24 hour circadian rhythms in gene expression, which are translated into rhythms in metabolism and behavior. It is derived from the Latin roots 'circa' (about) and 'diem' (day) and acts as an important regulator of a wide array of physiological functions including metabolism, sleep, body temperature, blood pressure, endocrine, immune, cardiovascular, and renal function. Consists of two major components: the central clock, residing in the suprachiasmatic nucleus (SCN) of the brain, and the peripheral clocks that are present in nearly every tissue and organ system. Both the central and peripheral clocks can be reset by environmental cues, also known as Zeitgebers (German for 'timegivers'). The predominant Zeitgeber for the central clock is light, which is sensed by retina and signals directly to the SCN. The central clock entrains the peripheral clocks through neuronal and hormonal signals, body temperature and feeding-related cues, aligning all clocks with the external light/dark cycle. Circadian rhythms allow an organism to achieve temporal homeostasis with its environment at the molecular level by regulating gene expression to create a peak of protein expression once every 24 hours to control when a particular physiological process is most active with respect to the solar day. Transcription and translation of core clock components (CLOCK, NPAS2, BMAL1, BMAL2, PER1, PER2, PER3, CRY1 and CRY2) plays a critical role in rhythm generation, whereas delays imposed by post-translational modifications (PTMs) are important for determining the period (tau) of the rhythms (tau refers to the period of a rhythm and is the length, in time, of one complete cycle). A diurnal rhythm is synchronized with the day/night cycle, while the ultradian and infradian rhythms have a period shorter and longer than 24 hours, respectively. Disruptions in the circadian rhythms contribute to the pathology of cardiovascular diseases, cancer, metabolic syndrome and aging. A transcription/translation feedback loop (TTFL) forms the core of the molecular circadian clock mechanism. Transcription factors, CLOCK or NPAS2 and BMAL1 or BMAL2, form the positive limb of the feedback loop, act in the form of a heterodimer and activate the transcription of core clock genes and clock-controlled genes (involved in key metabolic processes), harboring E-box elements (5'-CACGTG-3') within their promoters. The core clock genes: PER1/2/3 and CRY1/2 which are transcriptional repressors form the negative limb of the feedback loop and interact with the CLOCK|NPAS2-BMAL1|BMAL2 heterodimer inhibiting its activity and thereby negatively regulating their own expression. This heterodimer also activates nuclear receptors NR1D1/2 and RORA/B/G, which form a second feedback loop and which activate and repress BMAL1 transcription, respectively. PER1 and PER2 proteins transport CRY1 and CRY2 into the nucleus with appropriate circadian timing, but also contribute directly to repression of clock-controlled target genes through interaction with several classes of RNA-binding proteins, helicases and others transcriptional repressors. PER appears to regulate circadian control of transcription by at least three different modes. First, interacts directly with the CLOCK-BMAL1 at the tail end of the nascent transcript peak to recruit complexes containing the SIN3-HDAC that remodel chromatin to repress transcription. Second, brings H3K9 methyltransferases such as SUV39H1 and SUV39H2 to the E-box elements of the circadian target genes, like PER2 itself or PER1. The recruitment of each repressive modifier to the DNA seems to be very precisely temporally orchestrated by the large PER complex, the deacetylases acting before than the methyltransferases. Additionally, large PER complexes are also recruited to the target genes 3' termination site through interactions with RNA-binding proteins and helicases that may play a role in transcription termination to regulate transcription independently of CLOCK-BMAL1 interactions. Recruitment of large PER complexes to the elongating polymerase at PER and CRY termination sites inhibited SETX action, impeding RNA polymerase II release and thereby repressing transcriptional reinitiation. May propagate clock information to metabolic pathways via the interaction with nuclear receptors. Coactivator of PPARA and corepressor of NR1D1, binds rhythmically at the promoter of nuclear receptors target genes like BMAL1 or G6PC1. Directly and specifically represses PPARG proadipogenic activity by blocking PPARG recruitment to target promoters and thereby transcriptional activation. Required for fatty acid and lipid metabolism, is involved as well in the regulation of circulating insulin levels. Plays an important role in the maintenance of cardiovascular functions through the regulation of NO and vasodilatatory prostaglandins production in aortas. Controls circadian glutamate uptake in synaptic vesicles through the regulation of VGLUT1 expression. May also be involved in the regulation of inflammatory processes. Represses the CLOCK-BMAL1 induced transcription of BHLHE40/DEC1 and ATF4. Negatively regulates the formation of the TIMELESS-CRY1 complex by competing with TIMELESS for binding to CRY1. The chain is Period circadian protein homolog 2 (PER2) from Spalax judaei (Judean Mountains blind mole rat).